We begin with the raw amino-acid sequence, 73 residues long: Beta-1 adrenergic receptor (73 aa).

The helical transmembrane segment at 1–12 (ISALVSFLPILM) threads the bilayer. Over 13-38 (HWWRAENDEARRCYNDPKCCDFVTNR) the chain is Extracellular. Cysteine 25 and cysteine 31 are disulfide-bonded. The chain crosses the membrane as a helical span at residues 39–64 (AYAIASSVVSFYVPLCIMAFVYLRVF). Serine 44 serves as a coordination point for cyanopindolol. At 65-73 (REAQKQVKK) the chain is on the cytoplasmic side.

It belongs to the G-protein coupled receptor 1 family. Adrenergic receptor subfamily. ADRB1 sub-subfamily. As to quaternary structure, interacts (via C-terminus PDZ motif) with RAPGEF2; the interaction is direct. Interacts with GOPC, MAGI3 and DLG4. In terms of processing, homologous desensitization of the receptor is mediated by its phosphorylation by beta-adrenergic receptor kinase.

It localises to the cell membrane. The protein resides in the early endosome. Beta-adrenergic receptors mediate the catecholamine-induced activation of adenylate cyclase through the action of G proteins. This receptor binds epinephrine and norepinephrine with approximately equal affinity. Mediates Ras activation through G(s)-alpha- and cAMP-mediated signaling. In dorsal pons neurons, involved in the regulation of sleep/wake behaviors. This Meriones unguiculatus (Mongolian jird) protein is Beta-1 adrenergic receptor (ADRB1).